The following is an 865-amino-acid chain: Alanine--tRNA ligase (865 aa).

4 residues coordinate Zn(2+): H554, H558, C656, and H660.

The protein belongs to the class-II aminoacyl-tRNA synthetase family. The cofactor is Zn(2+).

It localises to the cytoplasm. The catalysed reaction is tRNA(Ala) + L-alanine + ATP = L-alanyl-tRNA(Ala) + AMP + diphosphate. In terms of biological role, catalyzes the attachment of alanine to tRNA(Ala) in a two-step reaction: alanine is first activated by ATP to form Ala-AMP and then transferred to the acceptor end of tRNA(Ala). Also edits incorrectly charged Ser-tRNA(Ala) and Gly-tRNA(Ala) via its editing domain. This is Alanine--tRNA ligase from Francisella tularensis subsp. holarctica (strain LVS).